The following is a 2058-amino-acid chain: E3 ubiquitin-protein ligase ubr-1 (2058 aa).

The UBR-type zinc finger occupies 93–164 (QICGHVFKNG…EGYACANHEK (72 aa)). The interval 1107 to 1175 (VPEAAPAPEN…TPSEKSETVV (69 aa)) is disordered. A compositionally biased stretch (low complexity) spans 1108 to 1119 (PEAAPAPENKPA). 2 stretches are compositionally biased toward basic and acidic residues: residues 1123-1138 (EEIK…EMRQ) and 1153-1175 (KKIE…ETVV). An RING-type; atypical zinc finger spans residues 1217–1335 (LTCILCQEDE…GEYQCPLCKR (119 aa)). 2 disordered regions span residues 1381-1416 (LSSE…DTAN) and 1475-1499 (PAAT…ESGK). Basic residues predominate over residues 1388–1397 (KKGHSRKRSH). Basic and acidic residues predominate over residues 1398–1413 (SERSLLDLEKLSKDPD). The segment covering 1486–1495 (GSSSRIPESQ) has biased composition (polar residues). The chain crosses the membrane as a helical span at residues 1695–1715 (ILQIDILSLAISLMMTIGWTW).

It belongs to the E3 ubiquitin-protein ligase UBR1-like family. Interacts with ubc-1. Component of a complex containing at least ced-3, ubr-1 and possibly ate-1. Within complex interacts with ced-3 (via the p17 subunit); this interaction is required for the ced-3-mediated cleavage and subsequent degradation of the heterochronic protein lin-28. As to expression, expressed in pharyngeal muscles, body wall muscles and a subset of neurons throughout postembryonic development. Prominently expressed in premotor interneurons, but not expressed in ventral cord motor neurons. Weakly expressed in hypodermal seam cells.

The protein localises to the membrane. It carries out the reaction S-ubiquitinyl-[E2 ubiquitin-conjugating enzyme]-L-cysteine + [acceptor protein]-L-lysine = [E2 ubiquitin-conjugating enzyme]-L-cysteine + N(6)-ubiquitinyl-[acceptor protein]-L-lysine.. Its pathway is protein modification; protein ubiquitination. Its function is as follows. E3 ubiquitin-protein ligase which is a component of the N-end rule pathway. Recognizes and binds to proteins bearing specific N-terminal residues that are destabilizing according to the N-end rule, leading to their ubiquitination and subsequent degradation. In complex with ced-3, required for the ced-3-mediated cleavage and subsequent degradation of the heterochronic protein lin-28 to regulate seam cell fate patterning during larval development. Negatively regulates glutamate metabolism through the aspartate aminotransferase got-1.2. Modulation of glutamate levels most likely controls locomotory behavior, in particular backwards locomotion or 'reversals'. The polypeptide is E3 ubiquitin-protein ligase ubr-1 (Caenorhabditis elegans).